The following is a 153-amino-acid chain: Ribosomal RNA large subunit methyltransferase H (153 aa).

Residues Leu-75, Gly-102, and 121–126 (LSKLTL) each bind S-adenosyl-L-methionine.

The protein belongs to the RNA methyltransferase RlmH family. In terms of assembly, homodimer.

Its subcellular location is the cytoplasm. It carries out the reaction pseudouridine(1915) in 23S rRNA + S-adenosyl-L-methionine = N(3)-methylpseudouridine(1915) in 23S rRNA + S-adenosyl-L-homocysteine + H(+). Functionally, specifically methylates the pseudouridine at position 1915 (m3Psi1915) in 23S rRNA. The chain is Ribosomal RNA large subunit methyltransferase H from Campylobacter jejuni (strain RM1221).